Reading from the N-terminus, the 349-residue chain is Isopentenyl-diphosphate delta-isomerase (349 aa).

9 to 10 (RK) lines the substrate pocket. FMN-binding positions include 65 to 67 (AMT), Ser-95, and Asn-124. 95-97 (STH) provides a ligand contact to substrate. Gln-154 serves as a coordination point for substrate. Glu-155 contacts Mg(2+). FMN is bound by residues Lys-186, Ser-211, Thr-216, 262-264 (GLR), and 283-284 (SR).

It belongs to the IPP isomerase type 2 family. As to quaternary structure, homooctamer. Dimer of tetramers. Requires FMN as cofactor. It depends on NADPH as a cofactor. Mg(2+) is required as a cofactor.

Its subcellular location is the cytoplasm. The catalysed reaction is isopentenyl diphosphate = dimethylallyl diphosphate. Functionally, involved in the biosynthesis of isoprenoids. Catalyzes the 1,3-allylic rearrangement of the homoallylic substrate isopentenyl (IPP) to its allylic isomer, dimethylallyl diphosphate (DMAPP). The polypeptide is Isopentenyl-diphosphate delta-isomerase (Staphylococcus aureus).